The primary structure comprises 162 residues: Interleukin-15 (162 aa).

An N-terminal signal peptide occupies residues methionine 1–alanine 29. Positions glycine 30–alanine 48 are excised as a propeptide. Intrachain disulfides connect cysteine 83-cysteine 133 and cysteine 90-cysteine 136. The N-linked (GlcNAc...) asparagine glycan is linked to asparagine 108.

This sequence belongs to the IL-15/IL-21 family.

It localises to the secreted. Its function is as follows. Cytokine that plays a major role in the development of inflammatory and protective immune responses to microbial invaders and parasites by modulating immune cells of both the innate and adaptive immune systems. Stimulates the proliferation of natural killer cells, T-cells and B-cells and promotes the secretion of several cytokines. In monocytes, induces the production of IL8 and monocyte chemotactic protein 1/CCL2, two chemokines that attract neutrophils and monocytes respectively to sites of infection. Unlike most cytokines, which are secreted in soluble form, IL15 is expressed in association with its high affinity IL15RA on the surface of IL15-producing cells and delivers signals to target cells that express IL2RB and IL2RG receptor subunits. Binding to its receptor triggers the phosphorylation of JAK1 and JAK3 and the recruitment and subsequent phosphorylation of signal transducer and activator of transcription-3/STAT3 and STAT5. In mast cells, induces the rapid tyrosine phosphorylation of STAT6 and thereby controls mast cell survival and release of cytokines such as IL4. The polypeptide is Interleukin-15 (IL15) (Ailuropoda melanoleuca (Giant panda)).